Here is an 82-residue protein sequence, read N- to C-terminus: DNA-directed RNA polymerase subunit Rpo5 (82 aa).

The protein belongs to the archaeal Rpo5/eukaryotic RPB5 RNA polymerase subunit family. As to quaternary structure, part of the RNA polymerase complex.

The protein resides in the cytoplasm. It carries out the reaction RNA(n) + a ribonucleoside 5'-triphosphate = RNA(n+1) + diphosphate. DNA-dependent RNA polymerase (RNAP) catalyzes the transcription of DNA into RNA using the four ribonucleoside triphosphates as substrates. The sequence is that of DNA-directed RNA polymerase subunit Rpo5 from Pyrococcus abyssi (strain GE5 / Orsay).